The chain runs to 473 residues: Glutamyl-tRNA reductase (473 aa).

Residues 49 to 52 (TCNR), Ser-109, 114 to 116 (EHQ), and Gln-120 contribute to the substrate site. Residue Cys-50 is the Nucleophile of the active site. Position 189–194 (189–194 (GAGAMA)) interacts with NADP(+). Residues 422 to 473 (VAISAPQPSTDSPARAAYQPTDEAATDAEPRRDDAEPPSAAAAQDAGRESRP) are disordered.

The protein belongs to the glutamyl-tRNA reductase family. Homodimer.

It catalyses the reaction (S)-4-amino-5-oxopentanoate + tRNA(Glu) + NADP(+) = L-glutamyl-tRNA(Glu) + NADPH + H(+). Its pathway is porphyrin-containing compound metabolism; protoporphyrin-IX biosynthesis; 5-aminolevulinate from L-glutamyl-tRNA(Glu): step 1/2. Functionally, catalyzes the NADPH-dependent reduction of glutamyl-tRNA(Glu) to glutamate 1-semialdehyde (GSA). The protein is Glutamyl-tRNA reductase of Acidothermus cellulolyticus (strain ATCC 43068 / DSM 8971 / 11B).